The primary structure comprises 326 residues: Iron-sulfur cluster assembly SufBD family protein PH0883 (326 aa).

Belongs to the iron-sulfur cluster assembly SufBD family.

The chain is Iron-sulfur cluster assembly SufBD family protein PH0883 from Pyrococcus horikoshii (strain ATCC 700860 / DSM 12428 / JCM 9974 / NBRC 100139 / OT-3).